The primary structure comprises 450 residues: ATP-dependent protease ATPase subunit HslU (450 aa).

ATP-binding positions include valine 29, 71 to 76, aspartate 261, glutamate 328, and arginine 400; that span reads GVGKTE.

It belongs to the ClpX chaperone family. HslU subfamily. As to quaternary structure, a double ring-shaped homohexamer of HslV is capped on each side by a ring-shaped HslU homohexamer. The assembly of the HslU/HslV complex is dependent on binding of ATP.

The protein localises to the cytoplasm. ATPase subunit of a proteasome-like degradation complex; this subunit has chaperone activity. The binding of ATP and its subsequent hydrolysis by HslU are essential for unfolding of protein substrates subsequently hydrolyzed by HslV. HslU recognizes the N-terminal part of its protein substrates and unfolds these before they are guided to HslV for hydrolysis. The sequence is that of ATP-dependent protease ATPase subunit HslU from Rickettsia rickettsii (strain Iowa).